A 278-amino-acid polypeptide reads, in one-letter code: Tryptophan synthase alpha chain (278 aa).

Catalysis depends on proton acceptor residues Glu-50 and Asp-61.

The protein belongs to the TrpA family. As to quaternary structure, tetramer of two alpha and two beta chains.

It catalyses the reaction (1S,2R)-1-C-(indol-3-yl)glycerol 3-phosphate + L-serine = D-glyceraldehyde 3-phosphate + L-tryptophan + H2O. Its pathway is amino-acid biosynthesis; L-tryptophan biosynthesis; L-tryptophan from chorismate: step 5/5. In terms of biological role, the alpha subunit is responsible for the aldol cleavage of indoleglycerol phosphate to indole and glyceraldehyde 3-phosphate. This is Tryptophan synthase alpha chain from Rhodopseudomonas palustris (strain HaA2).